Here is a 433-residue protein sequence, read N- to C-terminus: MLDPRHVAEHLDEVRAALALRSPAAAASLGDDFASTVSARRSNIQELERWQAERNAANEAMARLDKKSPEFAQKRDELKALSTRIKEAEQVVSELEKRMTELLSVVPNLPDPSVPVGAGEEGNVVVRAWGEKPSFSFAPKSHWDIGTALGLLDFERAAKLSGARFTVLMGAAARLERALISFMLDLHTREQGYLEVLPPFLVKDTALFGTGNLPKFAEDLFKTQKSDPERAYDLYLIPTAEVPVTNLHADEILDGASLPIAYAAYTPCFRSEAGSHGRDVRGLIRQHQFDKVELVRFSAPEDSARQHELLTSHAEEVLKRLGLHYRVSALCTGDLGFGSQKTYDLEVWLPGQGVYREISSCSNFGDFQARRAQIRYRPEPKAKPRLVHTMNGSALAVGRTVIAILEQYQQADGTVVVPEPLRAFMGCEVLRGR.

239–241 (TAE) is an L-serine binding site. 270–272 (RSE) is an ATP binding site. Glutamate 293 lines the L-serine pocket. Position 357 to 360 (357 to 360 (EISS)) interacts with ATP. Serine 393 provides a ligand contact to L-serine.

The protein belongs to the class-II aminoacyl-tRNA synthetase family. Type-1 seryl-tRNA synthetase subfamily. In terms of assembly, homodimer. The tRNA molecule binds across the dimer.

It is found in the cytoplasm. It carries out the reaction tRNA(Ser) + L-serine + ATP = L-seryl-tRNA(Ser) + AMP + diphosphate + H(+). It catalyses the reaction tRNA(Sec) + L-serine + ATP = L-seryl-tRNA(Sec) + AMP + diphosphate + H(+). It participates in aminoacyl-tRNA biosynthesis; selenocysteinyl-tRNA(Sec) biosynthesis; L-seryl-tRNA(Sec) from L-serine and tRNA(Sec): step 1/1. Functionally, catalyzes the attachment of serine to tRNA(Ser). Is also able to aminoacylate tRNA(Sec) with serine, to form the misacylated tRNA L-seryl-tRNA(Sec), which will be further converted into selenocysteinyl-tRNA(Sec). The chain is Serine--tRNA ligase from Sorangium cellulosum (strain So ce56) (Polyangium cellulosum (strain So ce56)).